The sequence spans 423 residues: Methionine aminopeptidase 2 (423 aa).

The segment covering 1–17 (MTDVIDAKPEEAKKVPP) has biased composition (basic and acidic residues). Residues 1–89 (MTDVIDAKPE…IQPYKDDNAY (89 aa)) form a disordered region. Residues 18 to 29 (EVEDEDSGDESA) are compositionally biased toward acidic residues. The span at 41–54 (KKKKKKKKPKKKKK) shows a compositional bias: basic residues. Position 176 (His-176) interacts with substrate. A divalent metal cation is bound by residues Asp-196, Asp-207, and His-276. His-284 serves as a coordination point for substrate. A divalent metal cation-binding residues include Glu-309 and Glu-404.

Belongs to the peptidase M24A family. Methionine aminopeptidase eukaryotic type 2 subfamily. Requires Co(2+) as cofactor. Zn(2+) is required as a cofactor. Mn(2+) serves as cofactor. It depends on Fe(2+) as a cofactor.

The protein resides in the cytoplasm. The enzyme catalyses Release of N-terminal amino acids, preferentially methionine, from peptides and arylamides.. Cotranslationally removes the N-terminal methionine from nascent proteins. The N-terminal methionine is often cleaved when the second residue in the primary sequence is small and uncharged (Met-Ala-, Cys, Gly, Pro, Ser, Thr, or Val). In Schizophyllum commune (strain H4-8 / FGSC 9210) (Split gill fungus), this protein is Methionine aminopeptidase 2.